A 311-amino-acid polypeptide reads, in one-letter code: Methionyl-tRNA formyltransferase (311 aa).

110–113 lines the (6S)-5,6,7,8-tetrahydrofolate pocket; that stretch reads SLLP.

The protein belongs to the Fmt family.

The catalysed reaction is L-methionyl-tRNA(fMet) + (6R)-10-formyltetrahydrofolate = N-formyl-L-methionyl-tRNA(fMet) + (6S)-5,6,7,8-tetrahydrofolate + H(+). Functionally, attaches a formyl group to the free amino group of methionyl-tRNA(fMet). The formyl group appears to play a dual role in the initiator identity of N-formylmethionyl-tRNA by promoting its recognition by IF2 and preventing the misappropriation of this tRNA by the elongation apparatus. The chain is Methionyl-tRNA formyltransferase from Streptococcus pneumoniae (strain JJA).